Consider the following 80-residue polypeptide: Acyl carrier protein (80 aa).

The Carrier domain maps to 4–79 (EEILQKVCSI…DAVKFIEEKK (76 aa)). O-(pantetheine 4'-phosphoryl)serine is present on Ser39.

It belongs to the acyl carrier protein (ACP) family. 4'-phosphopantetheine is transferred from CoA to a specific serine of apo-ACP by AcpS. This modification is essential for activity because fatty acids are bound in thioester linkage to the sulfhydryl of the prosthetic group.

Its subcellular location is the cytoplasm. It functions in the pathway lipid metabolism; fatty acid biosynthesis. Its function is as follows. Carrier of the growing fatty acid chain in fatty acid biosynthesis. The polypeptide is Acyl carrier protein (Prochlorococcus marinus subsp. pastoris (strain CCMP1986 / NIES-2087 / MED4)).